The chain runs to 268 residues: Exodeoxyribonuclease III (268 aa).

Glutamate 34 contributes to the Mg(2+) binding site. Tyrosine 109 is a catalytic residue. The Mg(2+) site is built by aspartate 151, asparagine 153, and aspartate 258. Aspartate 151 functions as the Proton donor/acceptor in the catalytic mechanism.

This sequence belongs to the DNA repair enzymes AP/ExoA family. As to quaternary structure, monomer. Mg(2+) serves as cofactor. Requires Mn(2+) as cofactor.

The enzyme catalyses Exonucleolytic cleavage in the 3'- to 5'-direction to yield nucleoside 5'-phosphates.. Functionally, major apurinic-apyrimidinic endonuclease of E.coli. It removes the damaged DNA at cytosines and guanines by cleaving on the 3'-side of the AP site by a beta-elimination reaction. It exhibits 3'-5'-exonuclease, 3'-phosphomonoesterase, 3'-repair diesterase and ribonuclease H activities. The protein is Exodeoxyribonuclease III (xthA) of Salmonella typhi.